A 194-amino-acid chain; its full sequence is Flagellar transcriptional regulator FlhC (194 aa).

Residues Cys139, Cys142, Cys159, and Cys162 each coordinate Zn(2+).

Belongs to the FlhC family. In terms of assembly, heterohexamer composed of two FlhC and four FlhD subunits. Each FlhC binds a FlhD dimer, forming a heterotrimer, and a hexamer assembles by dimerization of two heterotrimers. Zn(2+) is required as a cofactor.

The protein localises to the cytoplasm. Functionally, functions in complex with FlhD as a master transcriptional regulator that regulates transcription of several flagellar and non-flagellar operons by binding to their promoter region. Activates expression of class 2 flagellar genes, including fliA, which is a flagellum-specific sigma factor that turns on the class 3 genes. Also regulates genes whose products function in a variety of physiological pathways. The sequence is that of Flagellar transcriptional regulator FlhC from Serratia marcescens.